The primary structure comprises 105 residues: Nucleoid-associated protein ABO_1774 (105 aa).

Residues 85 to 105 form a disordered region; it reads QQQDSMQNMAGGFPFPPGFKP.

This sequence belongs to the YbaB/EbfC family. In terms of assembly, homodimer.

It localises to the cytoplasm. Its subcellular location is the nucleoid. In terms of biological role, binds to DNA and alters its conformation. May be involved in regulation of gene expression, nucleoid organization and DNA protection. This is Nucleoid-associated protein ABO_1774 from Alcanivorax borkumensis (strain ATCC 700651 / DSM 11573 / NCIMB 13689 / SK2).